A 111-amino-acid polypeptide reads, in one-letter code: Large ribosomal subunit protein P2 (111 aa).

The disordered stretch occupies residues 62–111 (LASVPSGGAGGAAAAGGAAAAGGAAEAAPEEAKEEEKEESDDDMGFGLFD). The span at 76–88 (AGGAAAAGGAAEA) shows a compositional bias: low complexity. S101 bears the Phosphoserine mark.

It belongs to the eukaryotic ribosomal protein P1/P2 family. In terms of assembly, P1 and P2 exist as dimers at the large ribosomal subunit.

Plays an important role in the elongation step of protein synthesis. The sequence is that of Large ribosomal subunit protein P2 from Podospora anserina (Pleurage anserina).